The chain runs to 111 residues: Large ribosomal subunit protein P2 (111 aa).

The span at 63–84 shows a compositional bias: low complexity; the sequence is ASMPTGGAPAAAAGGAATAPAA. Positions 63 to 111 are disordered; the sequence is ASMPTGGAPAAAAGGAATAPAAEAKEAKKEEKKEESEEEDEDMGFGLFD. The span at 85–97 shows a compositional bias: basic and acidic residues; the sequence is EAKEAKKEEKKEE. Ser-98 carries the post-translational modification Phosphoserine.

In terms of assembly, part of the ribosomal stalk of the large ribosomal subunit; P1 and P2 exist as dimers which assemble on the P0 scaffold.

Its function is as follows. Plays an important role in the elongation step of protein synthesis. The chain is Large ribosomal subunit protein P2 from Artemia salina (Brine shrimp).